The sequence spans 291 residues: AA14 family lytic polysaccharide monooxygenase (291 aa).

Positions 1–17 (MLTTAILFTSLAGSAYA) are cleaved as a signal peptide. A glycan (N-linked (GlcNAc...) asparagine) is linked at asparagine 141. 3 cysteine pairs are disulfide-bonded: cysteine 192–cysteine 197, cysteine 199–cysteine 220, and cysteine 240–cysteine 247.

It belongs to the polysaccharide monooxygenase AA14 family. Cu(2+) serves as cofactor.

The protein resides in the secreted. Its function is as follows. Lytic polysaccharide monooxygenase (LPMO) that is active against heteroxylan, xyloglucan and cellulose in beta-cellulose and released native oligosaccharides and corresponding C1- and/or C4-oxidized products. May act mainly on heteroxylan with numerous arabinosyl substituents between cellulose fibers rather than on recalcitrant xylan tightly associated with cellulose. Catalysis by LPMOs requires the reduction of the active-site copper from Cu(II) to Cu(I) by a reducing agent and H(2)O(2) or O(2) as a cosubstrate. Shows a branched chain preference, and has synergistic effects with the Penicillium parvum debranching enzyme ABF62C in an enzyme- and ascorbic acid-dependent manner. Also has synergistic effects with the Penicillium parvum GH10 endoxylanase XYN1, and the degree of synergy was greater with step-by-step addition than with simultaneous addition. The protein is AA14 family lytic polysaccharide monooxygenase of Sordaria brevicollis.